The chain runs to 125 residues: Phosphoribosyl-AMP cyclohydrolase (125 aa).

A Mg(2+)-binding site is contributed by aspartate 74. Cysteine 75 is a Zn(2+) binding site. Aspartate 76 and aspartate 78 together coordinate Mg(2+). 2 residues coordinate Zn(2+): cysteine 92 and cysteine 99.

This sequence belongs to the PRA-CH family. In terms of assembly, homodimer. Requires Mg(2+) as cofactor. Zn(2+) serves as cofactor.

It localises to the cytoplasm. The enzyme catalyses 1-(5-phospho-beta-D-ribosyl)-5'-AMP + H2O = 1-(5-phospho-beta-D-ribosyl)-5-[(5-phospho-beta-D-ribosylamino)methylideneamino]imidazole-4-carboxamide. Its pathway is amino-acid biosynthesis; L-histidine biosynthesis; L-histidine from 5-phospho-alpha-D-ribose 1-diphosphate: step 3/9. Its function is as follows. Catalyzes the hydrolysis of the adenine ring of phosphoribosyl-AMP. In Trichlorobacter lovleyi (strain ATCC BAA-1151 / DSM 17278 / SZ) (Geobacter lovleyi), this protein is Phosphoribosyl-AMP cyclohydrolase.